Here is a 339-residue protein sequence, read N- to C-terminus: Retroviral-like aspartic protease 1 (339 aa).

The propeptide occupies 1–188; that stretch reads MRNPGGPGWA…SEPEEILFAN (188 aa). The disordered stretch occupies residues 34–53; sequence VPAPFNSSRQGKNTAQPTEP. Over residues 38 to 53 the composition is skewed to polar residues; that stretch reads FNSSRQGKNTAQPTEP. N39 is a glycosylation site (N-linked (GlcNAc...) asparagine). Residues 55-75 traverse the membrane as a helical segment; it reads LSSVIAPTLFCAFLYLACVTA. In terms of domain architecture, Peptidase A2 spans 205-286; sequence VRFLVDSGAQ…AEEAIIGTDV (82 aa). The active site involves D210. N274 carries N-linked (GlcNAc...) asparagine glycosylation. A propeptide spanning residues 325-339 is cleaved from the precursor; the sequence is LIEEEEGSSAPEGSH.

As to quaternary structure, homodimer. Undergoes autocleavage which is necessary for activation of the protein. Highly expressed in stratified epithelia in skin, tongue, esophagus, forestomach and vagina. Also expressed in trachea, urinary bladder and thymus. Undetectable in simple epithelia. Within the epidermis, expressed exclusively in the granular layer (at protein level). Levels are elevated in benign skin tumors but are down-regulated in squamous cell carcinomas.

It is found in the membrane. Protease responsible for filaggrin processing, essential for the maintenance of a proper epidermis organization. This chain is Retroviral-like aspartic protease 1, found in Mus musculus (Mouse).